Consider the following 220-residue polypeptide: Protein DGCR6L (220 aa).

Residues 76 to 159 are a coiled coil; the sequence is KSLYNQRLRL…ADQQSTLEKA (84 aa).

It belongs to the gonadal family. Widely expressed in fetal and adult tissues. Highest expression in liver, heart and skeletal muscle. Lower levels in pancreas and placenta. Weak expression in brain.

The protein resides in the nucleus. Functionally, may play a role in neural crest cell migration into the third and fourth pharyngeal pouches. The sequence is that of Protein DGCR6L (DGCR6L) from Homo sapiens (Human).